The following is a 200-amino-acid chain: 2-phospho-L-lactate guanylyltransferase (200 aa).

This sequence belongs to the CofC family. As to quaternary structure, homodimer.

It catalyses the reaction (2S)-2-phospholactate + GTP + H(+) = (2S)-lactyl-2-diphospho-5'-guanosine + diphosphate. Its pathway is cofactor biosynthesis; coenzyme F420 biosynthesis. In terms of biological role, guanylyltransferase that catalyzes the activation of (2S)-2-phospholactate (2-PL) as (2S)-lactyl-2-diphospho-5'-guanosine, via the condensation of 2-PL with GTP. It is involved in the biosynthesis of coenzyme F420, a hydride carrier cofactor. This Ferroglobus placidus (strain DSM 10642 / AEDII12DO) protein is 2-phospho-L-lactate guanylyltransferase.